The following is a 396-amino-acid chain: Imidazolonepropionase (396 aa).

Positions 69 and 71 each coordinate Fe(3+). Zn(2+) is bound by residues His69 and His71. 4-imidazolone-5-propanoate is bound by residues Arg78, Tyr136, and His163. Residue Tyr136 participates in N-formimidoyl-L-glutamate binding. His224 provides a ligand contact to Fe(3+). Residue His224 coordinates Zn(2+). Gln227 provides a ligand contact to 4-imidazolone-5-propanoate. Asp298 contacts Fe(3+). Asp298 is a binding site for Zn(2+). N-formimidoyl-L-glutamate is bound by residues Asn300 and Gly302. A 4-imidazolone-5-propanoate-binding site is contributed by Thr303.

It belongs to the metallo-dependent hydrolases superfamily. HutI family. Zn(2+) serves as cofactor. It depends on Fe(3+) as a cofactor.

It localises to the cytoplasm. The catalysed reaction is 4-imidazolone-5-propanoate + H2O = N-formimidoyl-L-glutamate. Its pathway is amino-acid degradation; L-histidine degradation into L-glutamate; N-formimidoyl-L-glutamate from L-histidine: step 3/3. Catalyzes the hydrolytic cleavage of the carbon-nitrogen bond in imidazolone-5-propanoate to yield N-formimidoyl-L-glutamate. It is the third step in the universal histidine degradation pathway. The polypeptide is Imidazolonepropionase (Cutibacterium acnes (strain DSM 16379 / KPA171202) (Propionibacterium acnes)).